The primary structure comprises 327 residues: 2-keto-3-deoxygluconate permease (327 aa).

Helical transmembrane passes span 10–30 (IPGG…TFSP), 42–62 (GMIT…GASI), 73–93 (KSGT…AIAS), 95–115 (IIPE…LALV), 139–159 (AGAF…IILG), 163–183 (IASF…VGFA), 199–219 (VQTL…LTVI), 224–244 (LLGI…LIIA), 254–274 (TAGI…VLIA), and 289–309 (SLVA…TSIW).

Belongs to the KdgT transporter family.

It localises to the cell inner membrane. The catalysed reaction is 2-dehydro-3-deoxy-D-gluconate(in) + H(+)(in) = 2-dehydro-3-deoxy-D-gluconate(out) + H(+)(out). Its function is as follows. Catalyzes the proton-dependent uptake of 2-keto-3-deoxygluconate (KDG) into the cell. The sequence is that of 2-keto-3-deoxygluconate permease from Escherichia coli O139:H28 (strain E24377A / ETEC).